Consider the following 919-residue polypeptide: uncharacterized protein (919 aa).

Positions 1 to 15 (MEALILLSSQQSGSI) are enriched in low complexity. Disordered stretches follow at residues 1 to 167 (MEAL…DLEN), 179 to 312 (RFKP…STPS), 415 to 491 (HIYE…RLSL), 553 to 739 (QQQQ…TIKP), 751 to 863 (THNE…NNII), and 883 to 906 (LNINHQDGPNSASSTPRLPTDHIN). A compositionally biased stretch (polar residues) spans 16-25 (KNNCASTSDI). 3 stretches are compositionally biased toward low complexity: residues 34 to 75 (IVIV…SSSS), 96 to 107 (SSPSSSPNTPKT), and 141 to 153 (TPTTTSTSTTPIK). The span at 154–167 (PVKDPKEKEKDLEN) shows a compositional bias: basic and acidic residues. The segment covering 186–292 (NNTNNNNNIN…QQSSPTSSQT (107 aa)) has biased composition (low complexity). Residues 420–433 (PNENNNGGSFQKPN) show a composition bias toward polar residues. 4 stretches are compositionally biased toward low complexity: residues 450-471 (GVSGSPSHSPRVSQSPRVPSHP), 553-564 (QQQQQQQQQSSS), 573-589 (SQPQNSSSPRQPSQTPQ), and 618-635 (HMPQSPHMPHSPHLMPHS). Over residues 678-695 (YGSSPNLNGGKGSNNFLQ) the composition is skewed to polar residues. The span at 712-723 (SSVDSYSNSSPT) shows a compositional bias: low complexity. The segment covering 754-768 (ENYMSSPRQPLSPHN) has biased composition (polar residues). A compositionally biased stretch (basic and acidic residues) spans 785–797 (PHEHCNYIDKNDE). Over residues 798 to 863 (YYSNNNNNNN…NNNNNNNNII (66 aa)) the composition is skewed to low complexity. The segment covering 883–899 (LNINHQDGPNSASSTPR) has biased composition (polar residues).

This is an uncharacterized protein from Dictyostelium discoideum (Social amoeba).